We begin with the raw amino-acid sequence, 196 residues long: HTH-type transcriptional regulator EcpR (196 aa).

The HTH luxR-type domain maps to 138 to 196 (KDIKKDKITDREMEIIRMTAQGMLPKSIARIENCSVKTVYTHRRNAEAKLYSKIYKLVP). Positions 162–181 (PKSIARIENCSVKTVYTHRR) form a DNA-binding region, H-T-H motif.

Belongs to the EcpR/MatA family.

It is found in the cytoplasm. Its function is as follows. Part of the ecpRABCDE operon, which encodes the E.coli common pilus (ECP). ECP is found in both commensal and pathogenic strains and plays a dual role in early-stage biofilm development and host cell recognition. Positively regulates the expression of the ecp operon. The sequence is that of HTH-type transcriptional regulator EcpR (ecpR) from Escherichia coli O17:K52:H18 (strain UMN026 / ExPEC).